A 154-amino-acid chain; its full sequence is Protein X (154 aa).

Positions 68 to 117 (PCALRFTSARRMETTVNAPWNLPTTLHKRTLGLSPRSTTWIEEYIKDCVF) are mitochondrial targeting sequence.

This sequence belongs to the orthohepadnavirus protein X family. In terms of assembly, may form homodimer. May interact with host CEBPA, CFLAR, CREB1, DDB1, E4F1, HBXIP, HSPD1/HSP60, NFKBIA, POLR2E and SMAD4. Interacts with host SMC5-SMC6 complex and induces its degradation. Interacts with host TRPC4AP; leading to prevent ubiquitination of TRPC4AP. Interacts with host PLSCR1; this interaction promotes ubiquitination and degradation of HBx and impairs HBx-mediated cell proliferation. Post-translationally, a fraction may be phosphorylated in insect cells and HepG2 cells, a human hepatoblastoma cell line. Phosphorylated in vitro by host protein kinase C or mitogen-activated protein kinase. N-acetylated in insect cells.

Its subcellular location is the host cytoplasm. It is found in the host nucleus. It localises to the host mitochondrion. Multifunctional protein that plays a role in silencing host antiviral defenses and promoting viral transcription. Does not seem to be essential for HBV infection. May be directly involved in development of cirrhosis and liver cancer (hepatocellular carcinoma). Most of cytosolic activities involve modulation of cytosolic calcium. The effect on apoptosis is controversial depending on the cell types in which the studies have been conducted. May induce apoptosis by localizing in mitochondria and causing loss of mitochondrial membrane potential. May also modulate apoptosis by binding host CFLAR, a key regulator of the death-inducing signaling complex (DISC). Promotes viral transcription by using the host E3 ubiquitin ligase DDB1 to target the SMC5-SMC6 complex to proteasomal degradation. This host complex would otherwise bind to viral episomal DNA, and prevents its transcription. Moderately stimulates transcription of many different viral and cellular transcription elements. Promoters and enhancers stimulated by HBx contain DNA binding sites for NF-kappa-B, AP-1, AP-2, c-EBP, ATF/CREB, or the calcium-activated factor NF-AT. This is Protein X from Homo sapiens (Human).